A 333-amino-acid polypeptide reads, in one-letter code: Probable cytosolic iron-sulfur protein assembly protein ciao1-B (333 aa).

WD repeat units follow at residues 14–53 (HPDS…WECK), 59–98 (GHQR…FECL), 103–142 (GHEN…EYEC), 148–187 (SHTQ…WECR), 192–231 (GHTS…GGQE), 246–285 (FHGR…DPDQ), and 297–333 (AHTQ…QSGV).

It belongs to the WD repeat CIA1 family. Component of the CIA complex.

Key component of the cytosolic iron-sulfur protein assembly (CIA) complex, a multiprotein complex that mediates the incorporation of iron-sulfur cluster into extramitochondrial Fe/S proteins. The chain is Probable cytosolic iron-sulfur protein assembly protein ciao1-B (ciao1b) from Salmo salar (Atlantic salmon).